A 601-amino-acid polypeptide reads, in one-letter code: Cdc42-interacting protein 4 (601 aa).

The required for translocation to the plasma membrane in response to insulin, podosome formation and interaction with AKAP9 and microtubules stretch occupies residues 1-117; the sequence is MDWGTELWDQ…EMKQERKMHF (117 aa). Residues 1–264 form the F-BAR domain; it reads MDWGTELWDQ…AANAVDPKND (264 aa). Residues 67 to 259 adopt a coiled-coil conformation; that stretch reads FSQQQSFVQI…EGMKVAANAV (193 aa). Disordered stretches follow at residues 280-358, 390-420, and 478-543; these read GDVE…GRDP, DFSH…EVDQ, and NRGD…SPIG. Residues 289–302 show a composition bias toward polar residues; that stretch reads QPMNRAPSDSSLGT. The tract at residues 293–537 is interaction with CDC42; that stretch reads RAPSDSSLGT…TEFDEDFEEE (245 aa). The interaction with PDE6G stretch occupies residues 293–601; it reads RAPSDSSLGT…PTSYLRVTLN (309 aa). Phosphoserine is present on residues S296, S298, and S299. The span at 314–329 shows a compositional bias: basic residues; sequence GRSRTKRWPFGKKNKP. S335 is modified (phosphoserine). Positions 336–346 are enriched in low complexity; that stretch reads PLGGPVPSALP. S351 is subject to Phosphoserine. Residues 388 to 481 are a coiled coil; sequence TEDFSHLPPE…ESRVLSNRGD (94 aa). The REM-1 domain maps to 393–470; the sequence is HLPPEQQRKR…VQKYEAWLAE (78 aa). A compositionally biased stretch (basic and acidic residues) spans 407 to 420; the sequence is LEERSRELQKEVDQ. Residues 471–601 form a required for interaction with FASLG and localization to lysosomes region; sequence AESRVLSNRG…PTSYLRVTLN (131 aa). Phosphoserine is present on S482. Positions 487–541 are interaction with DNM2 and WASL; the sequence is ARPPDPPTSAPPDSSSNSASQDTKESSEEPPSEESQDTPIYTEFDEDFEEEPTSP. Residues 497–506 are compositionally biased toward low complexity; the sequence is PPDSSSNSAS. Residues 529 to 538 show a composition bias toward acidic residues; it reads EFDEDFEEEP. The segment at 529-601 is interaction with DNM1 and WASL; it reads EFDEDFEEEP…PTSYLRVTLN (73 aa). Positions 538–601 are required for podosome formation; it reads PTSPIGHCVA…PTSYLRVTLN (64 aa). The 62-residue stretch at 540-601 folds into the SH3 domain; it reads SPIGHCVAIY…PTSYLRVTLN (62 aa). The interval 544-601 is interaction with WAS; that stretch reads HCVAIYHFEGSSEGTISMAEGEDLSLMEEDKGDGWTRVRRKEGGEGYVPTSYLRVTLN. An interaction with ARHGAP17, DAAM1, DIAPH1 and DIAPH2 region spans residues 546–601; the sequence is VAIYHFEGSSEGTISMAEGEDLSLMEEDKGDGWTRVRRKEGGEGYVPTSYLRVTLN.

Belongs to the FNBP1 family. Homodimerizes, the dimers can polymerize end-to-end to form filamentous structures. Interacts with AKAP9, ARHGAP17, DAAM1, DIAPH1, DIAPH2, DNM1, FASLG/FASL, GAPVD1, LYN, microtubules, PDE6G, SRC and WAS/WASP. Interacts with the ligand binding domain of the thyroid receptor (TR) in the presence of thyroid hormone. May interact with CTNNB1 and HD/HTT. Interacts specifically with GTP-bound CDC42 and RHOQ. Interacts with DNM2 and WASL. Post-translationally, tyrosine phosphorylated. Also phosphorylated by PKA.

The protein localises to the cytoplasm. It localises to the cytoskeleton. Its subcellular location is the cell cortex. It is found in the lysosome. The protein resides in the golgi apparatus. The protein localises to the cell membrane. It localises to the cell projection. Its subcellular location is the phagocytic cup. In terms of biological role, required to coordinate membrane tubulation with reorganization of the actin cytoskeleton during endocytosis. Also acts as a link between CDC42 signaling and regulation of the actin cytoskeleton. Binds to lipids such as phosphatidylinositol 4,5-bisphosphate and phosphatidylserine and promotes membrane invagination and the formation of tubules. Also enhances actin polymerization in the vicinity of membrane tubules by recruiting WASL/N-WASP which in turn activates the Arp2/3 complex. Actin polymerization and dynamin may promote the fission of membrane tubules to form endocytic vesicles. Required for the formation of podosomes, actin-rich adhesion structures specific to monocyte-derived cells. Required for translocation of GLUT4 to the plasma membrane in response to insulin signaling. May be required for the lysosomal retention of FASLG/FASL. The protein is Cdc42-interacting protein 4 (TRIP10) of Pongo abelii (Sumatran orangutan).